We begin with the raw amino-acid sequence, 269 residues long: C-type lectin domain family 1 member A (269 aa).

Topologically, residues Met-1 to Leu-51 are cytoplasmic. Residues Thr-52–Phe-72 traverse the membrane as a helical; Signal-anchor for type II membrane protein segment. Topologically, residues Gln-73 to Gln-269 are extracellular. N-linked (GlcNAc...) asparagine glycans are attached at residues Asn-94, Asn-126, Asn-168, and Asn-202. In terms of domain architecture, C-type lectin spans Tyr-143–Glu-257. Intrachain disulfides connect Cys-164–Cys-256 and Cys-235–Cys-248.

It localises to the membrane. The chain is C-type lectin domain family 1 member A (Clec1a) from Mus musculus (Mouse).